Consider the following 110-residue polypeptide: Large ribosomal subunit protein uL22 (110 aa).

It belongs to the universal ribosomal protein uL22 family. In terms of assembly, part of the 50S ribosomal subunit.

In terms of biological role, this protein binds specifically to 23S rRNA; its binding is stimulated by other ribosomal proteins, e.g. L4, L17, and L20. It is important during the early stages of 50S assembly. It makes multiple contacts with different domains of the 23S rRNA in the assembled 50S subunit and ribosome. Its function is as follows. The globular domain of the protein is located near the polypeptide exit tunnel on the outside of the subunit, while an extended beta-hairpin is found that lines the wall of the exit tunnel in the center of the 70S ribosome. The protein is Large ribosomal subunit protein uL22 of Pectobacterium atrosepticum (strain SCRI 1043 / ATCC BAA-672) (Erwinia carotovora subsp. atroseptica).